Consider the following 431-residue polypeptide: Cyclin-B2-4 (431 aa).

A disordered region spans residues 1 to 30; that stretch reads MGGSDENRHGVIGPMNRQQGGLRGGKVIPT.

This sequence belongs to the cyclin family. Cyclin AB subfamily. In terms of assembly, interacts with SMR11.

In Arabidopsis thaliana (Mouse-ear cress), this protein is Cyclin-B2-4 (CYCB2-4).